Reading from the N-terminus, the 349-residue chain is PDZ and LIM domain protein 2 (349 aa).

The PDZ domain occupies 1 to 84 (MALTVDVAGP…PLRLQLDRSQ (84 aa)). The tract at residues 74-147 (SPLRLQLDRS…TPPPTSPVAL (74 aa)) is disordered. Residues 81-94 (DRSQTASPGQTNGE) show a composition bias toward polar residues. 5 positions are modified to phosphoserine: serine 124, serine 127, serine 129, serine 134, and serine 137. Threonine 138 and threonine 142 each carry phosphothreonine. Phosphoserine occurs at positions 143 and 163. Positions 169-212 (AHHLTYPGHPTSQQAGHSSPSDSAVRVLLHSPGRPSSPRFSSLD) are disordered. A compositionally biased stretch (polar residues) spans 178–190 (PTSQQAGHSSPSD). Phosphoserine is present on residues serine 199, serine 204, serine 205, serine 209, serine 210, and serine 263. The segment covering 199–210 (SPGRPSSPRFSS) has biased composition (low complexity). The 61-residue stretch at 281 to 341 (HTCEKCSVNI…EKHARQRYSM (61 aa)) folds into the LIM zinc-binding domain.

Interacts with alpha-actinins ACTN1 and ACTN4, FLNA and MYH9. Interacts (via LIM zinc-binding domain) with MKRN2. Highly expressed in lung. Expressed at intermediate level in kidney, testis and spleen. Weakly expressed in heart and brain.

It is found in the cytoplasm. The protein resides in the cytoskeleton. Its function is as follows. Probable adapter protein located at the actin cytoskeleton that promotes cell attachment. Necessary for the migratory capacity of epithelial cells. Overexpression enhances cell adhesion to collagen and fibronectin and suppresses anchorage independent growth. May contribute to tumor cell migratory capacity. The polypeptide is PDZ and LIM domain protein 2 (Pdlim2) (Mus musculus (Mouse)).